The sequence spans 444 residues: IMP-specific 5'-nucleotidase 1 (444 aa).

Residues lysine 132 and histidine 150 each contribute to the ATP site. The active-site Nucleophile is aspartate 170. Residues aspartate 170, aspartate 172, aspartate 178, threonine 204, serine 207, serine 308, aspartate 363, and lysine 371 each coordinate IMP. Mg(2+) contacts are provided by aspartate 170 and aspartate 172. Aspartate 172 functions as the Proton donor in the catalytic mechanism. Aspartate 394 is a Mg(2+) binding site.

The protein belongs to the ISN1 family. In terms of assembly, homotetramer. Requires Mg(2+) as cofactor.

The protein localises to the cytoplasm. It catalyses the reaction IMP + H2O = inosine + phosphate. Its activity is regulated as follows. At physiological pH, allosterically activated by ATP. ATP binding is a prerequisite to magnesium and substrate binding. ATP binds to 2 of the subunits in the homotetramer inducing a closure of these 2 subunits and the release of the C-terminal loop, thereby activating the enzyme. In this conformation, the enzyme can bind IMP and magnesium which ultimately leads to the release of ATP. At pH 5, ATP does not have an allosteric role and is dispensable for magnesium and substrate binding. Inhibited by phosphocholine and D-myo-inositol-4-phosphate. Its function is as follows. Specifically, catalyzes the dephosphorylation of inosine monophosphate (IMP) into inosine. By dephosphorylating IMP, plays a role in the purine salvage pathway. Does not have phosphotransferase activity with IMP as phosphate donor and adenosine as phosphate acceptor. In Plasmodium falciparum (isolate 3D7), this protein is IMP-specific 5'-nucleotidase 1.